The following is a 259-amino-acid chain: Phosphate import ATP-binding protein PstB (259 aa).

An ABC transporter domain is found at 10-254; sequence AESRNLSFYY…PSRKETEDYI (245 aa). 43–50 provides a ligand contact to ATP; sequence GPSGCGKS.

Belongs to the ABC transporter superfamily. Phosphate importer (TC 3.A.1.7) family. As to quaternary structure, the complex is composed of two ATP-binding proteins (PstB), two transmembrane proteins (PstC and PstA) and a solute-binding protein (PstS).

Its subcellular location is the cell inner membrane. The enzyme catalyses phosphate(out) + ATP + H2O = ADP + 2 phosphate(in) + H(+). In terms of biological role, part of the ABC transporter complex PstSACB involved in phosphate import. Responsible for energy coupling to the transport system. In Methylobacillus flagellatus (strain ATCC 51484 / DSM 6875 / VKM B-1610 / KT), this protein is Phosphate import ATP-binding protein PstB.